The chain runs to 113 residues: Urease subunit beta (113 aa).

It belongs to the urease beta subunit family. As to quaternary structure, heterotrimer of UreA (gamma), UreB (beta) and UreC (alpha) subunits. Three heterotrimers associate to form the active enzyme.

It localises to the cytoplasm. It catalyses the reaction urea + 2 H2O + H(+) = hydrogencarbonate + 2 NH4(+). It participates in nitrogen metabolism; urea degradation; CO(2) and NH(3) from urea (urease route): step 1/1. The protein is Urease subunit beta of Cyanothece sp. (strain PCC 7425 / ATCC 29141).